Consider the following 891-residue polypeptide: Extended synaptotagmin-3 (891 aa).

The segment at 1–30 (MQPEEPCAPSAPGGPDVPERGQRSRDPGPR) is disordered. Residues 1 to 32 (MQPEEPCAPSAPGGPDVPERGQRSRDPGPRLS) lie on the Cytoplasmic side of the membrane. A compositionally biased stretch (basic and acidic residues) spans 17-28 (VPERGQRSRDPG). A helical transmembrane segment spans residues 33-53 (GQLLPELYSFVARVLFYLAPV). A topological domain (lumenal) is located at residue tyrosine 54. Residues 55–75 (LAGYLGLSVTWLLLGALLWMW) traverse the membrane as a helical segment. At 76–891 (WRRNRRGKLG…ELTADGQPRS (816 aa)) the chain is on the cytoplasmic side. Positions 118–295 (DVERVEWANK…LPNRVTVPVK (178 aa)) constitute an SMP-LTD domain. C2 domains are found at residues 292–412 (VPVK…DEWF) and 430–570 (SLLT…QLDH). Lysine 325, aspartate 326, aspartate 336, aspartate 383, glutamate 384, aspartate 385, aspartate 387, aspartate 389, and aspartate 390 together coordinate Ca(2+). The disordered stretch occupies residues 652-711 (SAATTDPEPMPEPQGPGPEPKGKDSARGLCESPGKKKNPATTFLTVPGLHSPGPIKSPRP). Residues 659-670 (EPMPEPQGPGPE) show a composition bias toward pro residues. The 123-residue stretch at 759-881 (RLGEIQLTVR…DLIKGFSQWY (123 aa)) folds into the C2 3 domain. Positions 806 to 813 (RRWASRKK) are required for phosphatidylinositol 4,5-bisphosphate-dependent location at the cell membrane.

It belongs to the extended synaptotagmin family.

Its subcellular location is the cell membrane. The protein localises to the endoplasmic reticulum membrane. Its function is as follows. Tethers the endoplasmic reticulum to the cell membrane and promotes the formation of appositions between the endoplasmic reticulum and the cell membrane. Binds glycerophospholipids in a barrel-like domain and may play a role in cellular lipid transport. The sequence is that of Extended synaptotagmin-3 (Esyt3) from Mus musculus (Mouse).